Consider the following 234-residue polypeptide: uncharacterized protein (234 aa).

LRR repeat units lie at residues 44 to 63, 64 to 84, 85 to 107, and 111 to 134; these read LEFL…LPKL, KLRK…EKCP, NLTH…PLKQ, and LKSL…VFKL. The disordered stretch occupies residues 161 to 234; it reads EGLDDEEEGE…GEEERGQKRK (74 aa). Positions 163-226 are enriched in acidic residues; that stretch reads LDDEEEGEHE…GEEDEEELGE (64 aa).

This sequence belongs to the ANP32 family. Expressed in activated stem cells, such as mobilized CD34+ cells and cord blood CD34+ cells, but not in resting bone marrow CD34+ cells. Expressed in a variety of neoplastic cell lines, mainly in prostatic adenocarcinoma cell lines. Not expressed in normal prostatic tissue.

This is an uncharacterized protein from Homo sapiens (Human).